A 509-amino-acid polypeptide reads, in one-letter code: Aldehyde dehydrogenase 1A1 (509 aa).

Residues 175-178 (IPWN), 201-204 (KPAE), 234-235 (GP), 254-255 (GS), and 277-279 (ELG) contribute to the NAD(+) site. E277 (proton acceptor) is an active-site residue. The active-site Nucleophile is the C311. Residues 357-361 (EQFQK) and 408-410 (EIF) each bind NAD(+).

Belongs to the aldehyde dehydrogenase family. Homotetramer.

It is found in the cytoplasm. Its subcellular location is the cytosol. The protein localises to the cell projection. The protein resides in the axon. The catalysed reaction is an aldehyde + NAD(+) + H2O = a carboxylate + NADH + 2 H(+). It catalyses the reaction all-trans-retinal + NAD(+) + H2O = all-trans-retinoate + NADH + 2 H(+). The enzyme catalyses 9-cis-retinal + NAD(+) + H2O = 9-cis-retinoate + NADH + 2 H(+). It carries out the reaction 11-cis-retinal + NAD(+) + H2O = 11-cis-retinoate + NADH + 2 H(+). The catalysed reaction is 13-cis-retinal + NAD(+) + H2O = 13-cis-retinoate + NADH + 2 H(+). It catalyses the reaction 3-deoxyglucosone + NAD(+) + H2O = 2-dehydro-3-deoxy-D-gluconate + NADH + 2 H(+). The enzyme catalyses (E)-4-hydroxynon-2-enal + NAD(+) + H2O = (E)-4-hydroxynon-2-enoate + NADH + 2 H(+). It carries out the reaction malonaldehyde + NAD(+) + H2O = 3-oxopropanoate + NADH + 2 H(+). The catalysed reaction is hexanal + NAD(+) + H2O = hexanoate + NADH + 2 H(+). It catalyses the reaction propanal + NAD(+) + H2O = propanoate + NADH + 2 H(+). The enzyme catalyses acetaldehyde + NAD(+) + H2O = acetate + NADH + 2 H(+). It carries out the reaction benzaldehyde + NAD(+) + H2O = benzoate + NADH + 2 H(+). The catalysed reaction is 4-aminobutanal + NAD(+) + H2O = 4-aminobutanoate + NADH + 2 H(+). It functions in the pathway cofactor metabolism; retinol metabolism. Functionally, cytosolic dehydrogenase that catalyzes the irreversible oxidation of a wide range of aldehydes to their corresponding carboxylic acid. Functions downstream of retinol dehydrogenases and catalyzes the oxidation of retinaldehyde into retinoic acid, the second step in the oxidation of retinol/vitamin A into retinoic acid. This pathway is crucial to control the levels of retinol and retinoic acid, two important molecules which excess can be teratogenic and cytotoxic. Also oxidizes aldehydes resulting from lipid peroxidation like (E)-4-hydroxynon-2-enal/HNE, malonaldehyde and hexanal that form protein adducts and are highly cytotoxic. By participating for instance to the clearance of (E)-4-hydroxynon-2-enal/HNE in the lens epithelium prevents the formation of HNE-protein adducts and lens opacification. Also functions downstream of fructosamine-3-kinase in the fructosamine degradation pathway by catalyzing the oxidation of 3-deoxyglucosone, the carbohydrate product of fructosamine 3-phosphate decomposition, which is itself a potent glycating agent that may react with lysine and arginine side-chains of proteins. Also has an aminobutyraldehyde dehydrogenase activity and is probably part of an alternative pathway for the biosynthesis of GABA/4-aminobutanoate in midbrain, thereby playing a role in GABAergic synaptic transmission. The polypeptide is Aldehyde dehydrogenase 1A1 (Gallus gallus (Chicken)).